A 195-amino-acid polypeptide reads, in one-letter code: Putative manganese efflux pump MntP (195 aa).

Helical transmembrane passes span 4 to 24, 39 to 59, 64 to 84, 120 to 140, 145 to 165, and 175 to 195; these read ILITIILLAIVLGMDALSLAM, FVLTVGILHVLMPLLGLNLGL, FLGVWATRLGALVLVYLGWQM, ILLLGLSVSIDALTVGFTLGT, ILITVLIMGLIAASMSWVGFA, and GSYAQILGGVVLLALAIKFVV.

The protein belongs to the MntP (TC 9.B.29) family.

It is found in the cell membrane. Functionally, probably functions as a manganese efflux pump. This chain is Putative manganese efflux pump MntP, found in Syntrophomonas wolfei subsp. wolfei (strain DSM 2245B / Goettingen).